Reading from the N-terminus, the 2462-residue chain is Piezo-type mechanosensitive ion channel homolog (2462 aa).

A run of 19 helical transmembrane segments spans residues 5-25, 27-47, 57-77, 105-125, 163-183, 207-227, 248-268, 325-345, 347-367, 374-394, 404-424, 467-487, 502-522, 554-574, 653-673, 694-714, 730-750, 792-812, and 826-846; these read LVGF…WSVI, FLDL…GYRF, IFIF…IWAA, TVMY…ADIY, AVQL…FFIG, LYIY…PINF, EGPD…LSYV, FFTY…FHFA, LCAF…PSLF, GLLL…NVAF, FGLG…FLYL, LIFL…IFFL, SLIL…IDLV, IALL…LFSF, VYLV…LLWI, AVLV…QLWL, APLL…QLYS, FYAS…GLVI, and SFLI…LWGM. Residues 927–947 form a disordered region; it reads ASVSSSNGENPSSTDHASISM. A compositionally biased stretch (low complexity) spans 928–939; sequence SVSSSNGENPSS. 8 consecutive transmembrane segments (helical) span residues 1027 to 1047, 1050 to 1070, 1078 to 1098, 1143 to 1160, 1204 to 1224, 1228 to 1248, 1260 to 1280, and 1310 to 1330; these read FWIE…ALLL, FALL…CVLL, LWPV…VATW, TLIS…KLRA, LYCY…TGTL, ILHL…LEIL, VYNF…VGNF, and SALV…MFSS. Residues 1347-1400 are a coiled coil; that stretch reads AIVREQEKKAARKTEQLQQIREAEEKKRQRNLQVEKMKSEMLNLRVQLHRMNSD. Positions 1543–1583 are disordered; that stretch reads SDTNEQSSVDDEVYDEMESQKRKHTPFERSTSLQSDRSSDG. Acidic residues predominate over residues 1550 to 1559; that stretch reads SVDDEVYDEM. A compositionally biased stretch (polar residues) spans 1570-1583; the sequence is ERSTSLQSDRSSDG. Helical transmembrane passes span 1611–1631, 1647–1667, 1916–1936, 1956–1976, 1984–2004, 2012–2032, 2130–2150, and 2369–2389; these read FIIA…AALF, VIML…QIII, YIFG…QSVI, FVII…IYLC, VYYL…AWSI, AGLA…LQAI, GICL…MYSS, and FLGD…FVLA.

This sequence belongs to the PIEZO (TC 1.A.75) family.

It is found in the membrane. Functionally, pore-forming subunit of a mechanosensitive non-specific cation channel, that conducts both sodium and potassium ions. The protein is Piezo-type mechanosensitive ion channel homolog of Arabidopsis thaliana (Mouse-ear cress).